We begin with the raw amino-acid sequence, 409 residues long: Elongation factor Tu, chloroplastic (409 aa).

A tr-type G domain is found at 10-214 (KPHVNIGTIG…AVDEYIPTPE (205 aa)). Residues 19–26 (GHVDHGKT) are G1. 19–26 (GHVDHGKT) provides a ligand contact to GTP. Thr26 lines the Mg(2+) pocket. Residues 60-64 (GITIN) form a G2 region. Residues 81–84 (DCPG) form a G3 region. GTP contacts are provided by residues 81–85 (DCPGH) and 136–139 (NKED). Residues 136–139 (NKED) are G4. The G5 stretch occupies residues 174–176 (SAL).

Belongs to the TRAFAC class translation factor GTPase superfamily. Classic translation factor GTPase family. EF-Tu/EF-1A subfamily.

Its subcellular location is the plastid. The protein resides in the chloroplast. The catalysed reaction is GTP + H2O = GDP + phosphate + H(+). Its function is as follows. GTP hydrolase that promotes the GTP-dependent binding of aminoacyl-tRNA to the A-site of ribosomes during protein biosynthesis. This Phaeodactylum tricornutum (strain CCAP 1055/1) protein is Elongation factor Tu, chloroplastic (tufA).